The sequence spans 230 residues: Ion-translocating oxidoreductase complex subunit E (230 aa).

Residues 1–17 (MSENRTLMLNGMWNNNP) are Cytoplasmic-facing. Transmembrane regions (helical) follow at residues 18–38 (ALVQ…VTNA) and 39–59 (LGLG…VSLV). At 60-68 (RDYVPKEVR) the chain is on the cytoplasmic side. The helical transmembrane segment at 69–89 (IPVFVMIIASLVTCVQLLMNA) threads the bilayer. At 90 to 92 (YAY) the chain is on the periplasmic side. Residues 93–113 (GLYLSLGIFIPLIVTNCIIIG) form a helical membrane-spanning segment. Topologically, residues 114–123 (RAEAFASKND) are cytoplasmic. Residues 124-144 (VLPAALDGFWMGLGMTSVLVV) form a helical membrane-spanning segment. Residues 145–181 (LGSLREIIGNGTLFDGADLLLGEWAKVLRIEVFHFDS) are Periplasmic-facing. The chain crosses the membrane as a helical span at residues 182-202 (AFLLALLPPGAFIGVGFLIAA). Topologically, residues 203–230 (KSVIDKQIAARQPKQQKQAIERARVTNV) are cytoplasmic.

It belongs to the NqrDE/RnfAE family. In terms of assembly, the complex is composed of six subunits: RnfA, RnfB, RnfC, RnfD, RnfE and RnfG.

The protein localises to the cell inner membrane. Part of a membrane-bound complex that couples electron transfer with translocation of ions across the membrane. In Vibrio cholerae serotype O1 (strain ATCC 39541 / Classical Ogawa 395 / O395), this protein is Ion-translocating oxidoreductase complex subunit E.